The sequence spans 217 residues: Cytidylate kinase (217 aa).

ATP is bound at residue 21–29 (GPAASGKGT).

It belongs to the cytidylate kinase family. Type 1 subfamily.

It is found in the cytoplasm. It carries out the reaction CMP + ATP = CDP + ADP. The enzyme catalyses dCMP + ATP = dCDP + ADP. This Rickettsia bellii (strain OSU 85-389) protein is Cytidylate kinase.